A 478-amino-acid chain; its full sequence is Divinyl ether synthase CYP74D3 (478 aa).

Cysteine 432 contributes to the heme binding site.

It belongs to the cytochrome P450 family. 9-divinyl ether synthase subfamily. As to expression, not detected in leaves, stems or roots of healthy plants.

The protein resides in the cytoplasm. Its subcellular location is the cytosol. The enzyme catalyses (9S)-hydroperoxy-(10E,12Z)-octadecadienoate = colneleate + H2O. It catalyses the reaction (9S)-hydroperoxy-(10E,12Z,15Z)-octadecatrienoate = colnelenate + H2O. In terms of biological role, strictly inducible cytochrome P450 involved in the biosynthesis of the anti-fungal toxins colneleate and colnelenate. Can use (9S)-hydroperoxy-(10E,12Z)-octadecadienoate (9-HPOD) and (9S)-hydroperoxy-(10E,12Z,15Z)-octadecatrienoate (9-HPOT) as substrates, but has a very low activity with the corresponding 13-hydroperoxides (13-HPOD and 13-POT). This is Divinyl ether synthase CYP74D3 from Nicotiana tabacum (Common tobacco).